We begin with the raw amino-acid sequence, 426 residues long: Phytoene synthase 3, chloroplastic (426 aa).

A chloroplast-targeting transit peptide spans 1–52; it reads MMSTSRAVKSPACAARRRQWSADAPNRTATFLACRHGRRLGGGGGAPCSVRA.

This sequence belongs to the phytoene/squalene synthase family. As to expression, expressed in roots and endosperm.

Its subcellular location is the plastid. It localises to the chloroplast. It is found in the plastoglobule. It carries out the reaction 2 (2E,6E,10E)-geranylgeranyl diphosphate = 15-cis-phytoene + 2 diphosphate. In terms of biological role, catalyzes the conversion of geranylgeranyl diphosphate to phytoene. Mediates the first committed step in carotenoid biosynthesis. May play a role in regulating carotenoid flux in response to abiotic stress in roots. May control flux to carotenoid precursors that are required for abiotic stress-induced abscisic acid (ABA) formation in roots. The chain is Phytoene synthase 3, chloroplastic from Zea mays (Maize).